Consider the following 930-residue polypeptide: Beta-mannosidase A (930 aa).

An N-terminal signal peptide occupies residues 1 to 21; that stretch reads MHVKAETVLALLTPGLPSVVG. 5 N-linked (GlcNAc...) asparagine glycosylation sites follow: Asn-62, Asn-246, Asn-281, Asn-315, and Asn-346. Glu-478 acts as the Proton donor in catalysis. Residues Asn-536, Asn-607, Asn-630, Asn-657, Asn-737, Asn-760, Asn-782, Asn-789, Asn-797, Asn-823, and Asn-909 are each glycosylated (N-linked (GlcNAc...) asparagine).

The protein belongs to the glycosyl hydrolase 2 family. Beta-mannosidase A subfamily. As to quaternary structure, homodimer.

Its subcellular location is the secreted. It carries out the reaction Hydrolysis of terminal, non-reducing beta-D-mannose residues in beta-D-mannosides.. It functions in the pathway glycan metabolism; N-glycan degradation. In terms of biological role, exoglycosidase that cleaves the single beta-linked mannose residue from the non-reducing end of beta-mannosidic oligosaccharides of various complexity and length. Involved in the degradation of polymeric mannan and galactomannan. This Neosartorya fischeri (strain ATCC 1020 / DSM 3700 / CBS 544.65 / FGSC A1164 / JCM 1740 / NRRL 181 / WB 181) (Aspergillus fischerianus) protein is Beta-mannosidase A (mndA).